Reading from the N-terminus, the 126-residue chain is Large ribosomal subunit protein bL17 (126 aa).

Belongs to the bacterial ribosomal protein bL17 family. As to quaternary structure, part of the 50S ribosomal subunit. Contacts protein L32.

This is Large ribosomal subunit protein bL17 from Xylella fastidiosa (strain M12).